Here is an 81-residue protein sequence, read N- to C-terminus: Putative defensin-like protein 102 (81 aa).

The N-terminal stretch at 1–24 (MTTTMKTFVAFVLTVFFIMSSAHC) is a signal peptide. Intrachain disulfides connect C43/C78, C49/C71, C57/C76, and C61/C77.

The protein belongs to the DEFL family.

It is found in the secreted. The sequence is that of Putative defensin-like protein 102 from Arabidopsis thaliana (Mouse-ear cress).